Here is a 152-residue protein sequence, read N- to C-terminus: Large ribosomal subunit protein bL9 (152 aa).

Belongs to the bacterial ribosomal protein bL9 family.

Functionally, binds to the 23S rRNA. This is Large ribosomal subunit protein bL9 from Saccharophagus degradans (strain 2-40 / ATCC 43961 / DSM 17024).